Reading from the N-terminus, the 83-residue chain is Small ribosomal subunit protein bS16 (83 aa).

The protein belongs to the bacterial ribosomal protein bS16 family.

The protein is Small ribosomal subunit protein bS16 of Pseudoalteromonas atlantica (strain T6c / ATCC BAA-1087).